The primary structure comprises 485 residues: N-succinylglutamate 5-semialdehyde dehydrogenase (485 aa).

220–225 (GSANTG) serves as a coordination point for NAD(+). Active-site residues include glutamate 243 and cysteine 278.

The protein belongs to the aldehyde dehydrogenase family. AstD subfamily.

The catalysed reaction is N-succinyl-L-glutamate 5-semialdehyde + NAD(+) + H2O = N-succinyl-L-glutamate + NADH + 2 H(+). It participates in amino-acid degradation; L-arginine degradation via AST pathway; L-glutamate and succinate from L-arginine: step 4/5. Catalyzes the NAD-dependent reduction of succinylglutamate semialdehyde into succinylglutamate. The chain is N-succinylglutamate 5-semialdehyde dehydrogenase from Vibrio campbellii (strain ATCC BAA-1116).